The chain runs to 191 residues: Ankyrin repeat domain-containing protein 22 (191 aa).

ANK repeat units lie at residues 39-68 (NGDTPLICACRRGHVRIVSFLLRRNANVNL), 72-100 (KERTCLHYAVKKKFTFIDYLLIILLMPVL), 101-130 (LIGYFLMVSKTKQNEALVRMLLDAGVEVNA), and 134-163 (YGCTALHYACEMKNQSLIPLLLEARADPTI).

This Homo sapiens (Human) protein is Ankyrin repeat domain-containing protein 22 (ANKRD22).